The chain runs to 365 residues: Chorismate synthase (365 aa).

NADP(+)-binding residues include R48 and R54. FMN-binding positions include 125 to 127, 237 to 238, G277, 292 to 296, and R318; these read RSS, NA, and KPTSS.

It belongs to the chorismate synthase family. Homotetramer. It depends on FMNH2 as a cofactor.

It carries out the reaction 5-O-(1-carboxyvinyl)-3-phosphoshikimate = chorismate + phosphate. Its pathway is metabolic intermediate biosynthesis; chorismate biosynthesis; chorismate from D-erythrose 4-phosphate and phosphoenolpyruvate: step 7/7. In terms of biological role, catalyzes the anti-1,4-elimination of the C-3 phosphate and the C-6 proR hydrogen from 5-enolpyruvylshikimate-3-phosphate (EPSP) to yield chorismate, which is the branch point compound that serves as the starting substrate for the three terminal pathways of aromatic amino acid biosynthesis. This reaction introduces a second double bond into the aromatic ring system. In Verminephrobacter eiseniae (strain EF01-2), this protein is Chorismate synthase.